The following is a 438-amino-acid chain: Glutaryl-CoA dehydrogenase, mitochondrial (438 aa).

Residues 1-44 (MALRGVSVQLLSRVPGLRVFRTWVSSAAQTEKVGRTQSQLAKSS) constitute a mitochondrion transit peptide. Residues 138-139 (RS) and serine 186 contribute to the substrate site. FAD is bound by residues 177–186 (FGLTEPNSGS), serine 186, and 212–214 (WIT). At lysine 240 the chain carries N6-acetyllysine. Position 287 to 294 (287 to 294 (FGCLNNGR)) interacts with substrate. FAD contacts are provided by residues arginine 319, glutamine 330, and 387 to 391 (DMLGG). The active-site Proton acceptor is the glutamate 414. Glycine 415 contributes to the substrate binding site. Residues threonine 416, 416–418 (THD), and phenylalanine 434 contribute to the FAD site.

Belongs to the acyl-CoA dehydrogenase family. In terms of assembly, homotetramer. FAD is required as a cofactor.

Its subcellular location is the mitochondrion matrix. It carries out the reaction glutaryl-CoA + oxidized [electron-transfer flavoprotein] + 2 H(+) = (2E)-butenoyl-CoA + reduced [electron-transfer flavoprotein] + CO2. It functions in the pathway amino-acid metabolism; lysine degradation. Its pathway is amino-acid metabolism; tryptophan metabolism. Functionally, catalyzes the oxidative decarboxylation of glutaryl-CoA to crotonyl-CoA and CO(2) in the degradative pathway of L-lysine, L-hydroxylysine, and L-tryptophan metabolism. It uses electron transfer flavoprotein as its electron acceptor. The polypeptide is Glutaryl-CoA dehydrogenase, mitochondrial (GCDH) (Macaca fascicularis (Crab-eating macaque)).